Reading from the N-terminus, the 463-residue chain is METSQEPLVTQKKSKPSVWRSMSLFLVPLLLSNVLQSVGQLVGMMAVGRWLGVDAVAAVSSFFPLFFLLISFTIGIGSGSSILIGQAYGAKNEERLKAVVGTTLTFTFLLGVVLAVIGSIFTLDILRLMGTPENVIHVSANYARILFYAMPFMFLYFAYTTFLRGTGDSKTPFYTLIVSTVINIALLPVLILGMFGFPKLGIYGSAYATVISTIATFLVLMVYLRKRKHPLQFDKTVRRYLKMDKELLVLLLRLGVPASINMILVSLSEIAVISFVNHYGSNATAAYGVVNQVASYVQMPAVSLGIAVSIFAAQSIGANEFDRLKQVIRVGIWLNYIIGGVLIILIYVFSHQILSLFLTEQETLYIAHRLLMITLWSYLLFGNAQIISATMRASGTVLWPTVISIFAIWGVEVPVAFVLSHYTKLEILGVWVGYPAAFAVSLLLIYGYYQFVWKKKQITRLIQ.

12 helical membrane passes run 24–44, 56–76, 106–126, 143–163, 177–197, 202–222, 256–276, 293–313, 330–350, 370–390, 397–417, and 427–447; these read LFLV…LVGM, VAAV…TIGI, FTFL…LDIL, ARIL…TTFL, IVST…MFGF, IYGS…VLMV, VPAS…ISFV, VASY…IFAA, VGIW…YVFS, LLMI…ISAT, VLWP…PVAF, and ILGV…LIYG.

The protein belongs to the multi antimicrobial extrusion (MATE) (TC 2.A.66.1) family.

Its subcellular location is the cell membrane. In Bacillus subtilis (strain 168), this protein is Probable multidrug resistance protein YoeA (yoeA).